The chain runs to 662 residues: MHRASANSPLNSVSGSMMWRNQSSGRRPSKRLSDNEATLSTINSILGAEDMLSKNLLSYLPPNNEEIDMIYPSEQIMTFIEMLHGHKNFFKGQTIHNALRDSAVLKKQIAYGVAQALLNSVSIQQIHDEWKRHVRSFPFHNKKLSFQDYFSVWAHAIKQVILGDISNIINFILQSIDNSHYNRYVDWICTVGIVPFMRTTPTAPNLYNLLQQVSSKLIHDIVRHKQNIVTPILLGLSSVIIPDFHNIKIFRDRNSEQISCFKNKKAIAFFTYSTPYVIRNRLMLTTPLAHLSPELKKHNSLRRHQKMCQLLNTFPIKVLTAAKTDVTNKKIMDMIEKEEKNSDAKKSLIKFLLNLSDSKSKIGIRDSVEGFIQEITPSIIDQNKLMLNRGQFRKRSAIDTGERDVRDLFKKQIIKCMEEQIQTQMDEIETLKTTNQMFERKIKDLHSLLETNNDCDRYNPDLDHDLENLSLSRALNIVQRLPFTSVSIDDTRSVANSFFSQYIPDTQYADKRIDQLWEMEYMRTFRLRKNVNNQGQEESITYSNYSIELLIVPFLRRLLNIYNLESIPEEFLFLSLGEILLAIYESSKIKHYLRLVYVRELNQISEVYNLTQTHPENNEPIFDSNIFSPNPENEILEKIKRIRNLRRIQHLTRPNYPKGDQD.

Residues 1 to 26 (MHRASANSPLNSVSGSMMWRNQSSGR) show a composition bias toward polar residues. The interval 1–35 (MHRASANSPLNSVSGSMMWRNQSSGRRPSKRLSDN) is disordered.

It belongs to the herpesviridae portal protein family. Homododecamerizes. Interacts with terminase subunits TRM1 and TRM3.

The protein localises to the virion. It localises to the host nucleus. Functionally, forms a portal in the viral capsid through which viral DNA is translocated during DNA packaging. Assembles as a dodecamer at a single fivefold axe of the T=16 icosahedric capsid. Binds to the molecular motor that translocates the viral DNA, termed terminase. The chain is Portal protein (U76) from Human herpesvirus 6B (strain Z29) (HHV-6 variant B).